The sequence spans 324 residues: D-alanine--D-alanine ligase (324 aa).

Positions 120 to 322 (NNYLRGFGVE…LKEILTEIIE (203 aa)) constitute an ATP-grasp domain. 149-204 (IDKLGLPLIVKPNDGGSSFGVTKVTNITQIQLAIRNAFNEGEGVLIESFIPGTEIT) contacts ATP. Positions 276, 289, and 291 each coordinate Mg(2+).

It belongs to the D-alanine--D-alanine ligase family. Mg(2+) is required as a cofactor. It depends on Mn(2+) as a cofactor.

Its subcellular location is the cytoplasm. It carries out the reaction 2 D-alanine + ATP = D-alanyl-D-alanine + ADP + phosphate + H(+). It participates in cell wall biogenesis; peptidoglycan biosynthesis. Cell wall formation. The protein is D-alanine--D-alanine ligase of Azobacteroides pseudotrichonymphae genomovar. CFP2.